The sequence spans 558 residues: CTP synthase (558 aa).

Positions 1 to 270 (MTKYVFVTGG…DDLICRELDL (270 aa)) are amidoligase domain. S13 lines the CTP pocket. S13 is a binding site for UTP. ATP is bound by residues 14–19 (SLGKGI) and D71. Positions 71 and 144 each coordinate Mg(2+). CTP is bound by residues 151–153 (DIE), 191–196 (KTKPTQ), and K227. Residues 191–196 (KTKPTQ) and K227 each bind UTP. The region spanning 295–547 (TIGMVGKYVE…ISAALEHQKK (253 aa)) is the Glutamine amidotransferase type-1 domain. G356 provides a ligand contact to L-glutamine. C383 (nucleophile; for glutamine hydrolysis) is an active-site residue. L-glutamine-binding positions include 384-387 (LGMQ), E407, and R473. Active-site residues include H520 and E522.

It belongs to the CTP synthase family. Homotetramer.

The catalysed reaction is UTP + L-glutamine + ATP + H2O = CTP + L-glutamate + ADP + phosphate + 2 H(+). It carries out the reaction L-glutamine + H2O = L-glutamate + NH4(+). The enzyme catalyses UTP + NH4(+) + ATP = CTP + ADP + phosphate + 2 H(+). Its pathway is pyrimidine metabolism; CTP biosynthesis via de novo pathway; CTP from UDP: step 2/2. Allosterically activated by GTP, when glutamine is the substrate; GTP has no effect on the reaction when ammonia is the substrate. The allosteric effector GTP functions by stabilizing the protein conformation that binds the tetrahedral intermediate(s) formed during glutamine hydrolysis. Inhibited by the product CTP, via allosteric rather than competitive inhibition. Catalyzes the ATP-dependent amination of UTP to CTP with either L-glutamine or ammonia as the source of nitrogen. Regulates intracellular CTP levels through interactions with the four ribonucleotide triphosphates. The chain is CTP synthase from Polynucleobacter necessarius subsp. necessarius (strain STIR1).